We begin with the raw amino-acid sequence, 301 residues long: J domain-containing protein 1 (301 aa).

One can recognise a J domain in the interval 58–150 (TPYDIFGIPK…KKKIVYDTTR (93 aa)). Residues 208 to 228 (WTVIGIICGLAICIEGTALLA) traverse the membrane as a helical segment.

This sequence belongs to the DnaJ family.

It localises to the mitochondrion membrane. In terms of biological role, probable chaperone. This is J domain-containing protein 1 (JID1) from Saccharomyces cerevisiae (strain ATCC 204508 / S288c) (Baker's yeast).